A 494-amino-acid polypeptide reads, in one-letter code: Glycerol kinase (494 aa).

Threonine 12 contributes to the ADP binding site. The ATP site is built by threonine 12, threonine 13, and serine 14. Residue threonine 12 coordinates sn-glycerol 3-phosphate. Arginine 16 lines the ADP pocket. The sn-glycerol 3-phosphate site is built by arginine 82, glutamate 83, tyrosine 135, and aspartate 244. Glycerol-binding residues include arginine 82, glutamate 83, tyrosine 135, aspartate 244, and glutamine 245. ADP contacts are provided by threonine 266 and glycine 309. ATP-binding residues include threonine 266, glycine 309, glutamine 313, and glycine 409. Positions 409 and 413 each coordinate ADP.

The protein belongs to the FGGY kinase family.

The catalysed reaction is glycerol + ATP = sn-glycerol 3-phosphate + ADP + H(+). It participates in polyol metabolism; glycerol degradation via glycerol kinase pathway; sn-glycerol 3-phosphate from glycerol: step 1/1. With respect to regulation, inhibited by fructose 1,6-bisphosphate (FBP). In terms of biological role, key enzyme in the regulation of glycerol uptake and metabolism. Catalyzes the phosphorylation of glycerol to yield sn-glycerol 3-phosphate. This chain is Glycerol kinase, found in Alteromonas mediterranea (strain DSM 17117 / CIP 110805 / LMG 28347 / Deep ecotype).